A 162-amino-acid chain; its full sequence is Interleukin-15 (162 aa).

The N-terminal stretch at 1–29 is a signal peptide; the sequence is MRISKPHLRITSIQCYVCLLLNTHFLTEA. Residues 30–48 constitute a propeptide that is removed on maturation; sequence GIRVFILGCISAGIPKTEA. 2 disulfide bridges follow: C83–C133 and C90–C136. 3 N-linked (GlcNAc...) asparagine glycosylation sites follow: N119, N127, and N143.

The protein belongs to the IL-15/IL-21 family.

It is found in the secreted. Functionally, cytokine that plays a major role in the development of inflammatory and protective immune responses to microbial invaders and parasites by modulating immune cells of both the innate and adaptive immune systems. Stimulates the proliferation of natural killer cells, T-cells and B-cells and promotes the secretion of several cytokines. In monocytes, induces the production of IL8 and monocyte chemotactic protein 1/CCL2, two chemokines that attract neutrophils and monocytes respectively to sites of infection. Unlike most cytokines, which are secreted in soluble form, IL15 is expressed in association with its high affinity IL15RA on the surface of IL15-producing cells and delivers signals to target cells that express IL2RB and IL2RG receptor subunits. Binding to its receptor triggers the phosphorylation of JAK1 and JAK3 and the recruitment and subsequent phosphorylation of signal transducer and activator of transcription-3/STAT3 and STAT5. In mast cells, induces the rapid tyrosine phosphorylation of STAT6 and thereby controls mast cell survival and release of cytokines such as IL4. The protein is Interleukin-15 (IL15) of Marmota himalayana (Himalayan marmot).